Here is a 406-residue protein sequence, read N- to C-terminus: Argininosuccinate synthase (406 aa).

Residues 11–19 and Ala38 contribute to the ATP site; that span reads AYSGGLDTS. 2 residues coordinate L-citrulline: Tyr91 and Ser96. Gly121 contributes to the ATP binding site. L-aspartate is bound by residues Thr123, Asn127, and Asp128. Asn127 serves as a coordination point for L-citrulline. Residues Arg131, Ser181, Ser190, Glu266, and Tyr278 each coordinate L-citrulline.

It belongs to the argininosuccinate synthase family. Type 1 subfamily. As to quaternary structure, homotetramer.

The protein resides in the cytoplasm. It catalyses the reaction L-citrulline + L-aspartate + ATP = 2-(N(omega)-L-arginino)succinate + AMP + diphosphate + H(+). Its pathway is amino-acid biosynthesis; L-arginine biosynthesis; L-arginine from L-ornithine and carbamoyl phosphate: step 2/3. This chain is Argininosuccinate synthase, found in Campylobacter jejuni subsp. jejuni serotype O:23/36 (strain 81-176).